We begin with the raw amino-acid sequence, 238 residues long: Ribonuclease PH (238 aa).

Phosphate-binding positions include Arg-86 and 124–126 (GTR).

Belongs to the RNase PH family. In terms of assembly, homohexameric ring arranged as a trimer of dimers.

The catalysed reaction is tRNA(n+1) + phosphate = tRNA(n) + a ribonucleoside 5'-diphosphate. Phosphorolytic 3'-5' exoribonuclease that plays an important role in tRNA 3'-end maturation. Removes nucleotide residues following the 3'-CCA terminus of tRNAs; can also add nucleotides to the ends of RNA molecules by using nucleoside diphosphates as substrates, but this may not be physiologically important. Probably plays a role in initiation of 16S rRNA degradation (leading to ribosome degradation) during starvation. The chain is Ribonuclease PH from Klebsiella pneumoniae (strain 342).